We begin with the raw amino-acid sequence, 414 residues long: Gamma-glutamyl phosphate reductase (414 aa).

The protein belongs to the gamma-glutamyl phosphate reductase family.

It is found in the cytoplasm. It catalyses the reaction L-glutamate 5-semialdehyde + phosphate + NADP(+) = L-glutamyl 5-phosphate + NADPH + H(+). It participates in amino-acid biosynthesis; L-proline biosynthesis; L-glutamate 5-semialdehyde from L-glutamate: step 2/2. Its function is as follows. Catalyzes the NADPH-dependent reduction of L-glutamate 5-phosphate into L-glutamate 5-semialdehyde and phosphate. The product spontaneously undergoes cyclization to form 1-pyrroline-5-carboxylate. This is Gamma-glutamyl phosphate reductase from Xanthomonas campestris pv. campestris (strain B100).